Consider the following 404-residue polypeptide: Cysteine desulfurase IscS (404 aa).

Residues 75–76 (AT), N155, Q183, and 203–205 (SAH) contribute to the pyridoxal 5'-phosphate site. At K206 the chain carries N6-(pyridoxal phosphate)lysine. A pyridoxal 5'-phosphate-binding site is contributed by T243. C328 (cysteine persulfide intermediate) is an active-site residue. A [2Fe-2S] cluster-binding site is contributed by C328.

Belongs to the class-V pyridoxal-phosphate-dependent aminotransferase family. NifS/IscS subfamily. Homodimer. Forms a heterotetramer with IscU, interacts with other sulfur acceptors. Pyridoxal 5'-phosphate serves as cofactor.

Its subcellular location is the cytoplasm. The catalysed reaction is (sulfur carrier)-H + L-cysteine = (sulfur carrier)-SH + L-alanine. It functions in the pathway cofactor biosynthesis; iron-sulfur cluster biosynthesis. Master enzyme that delivers sulfur to a number of partners involved in Fe-S cluster assembly, tRNA modification or cofactor biosynthesis. Catalyzes the removal of elemental sulfur atoms from cysteine to produce alanine. Functions as a sulfur delivery protein for Fe-S cluster synthesis onto IscU, an Fe-S scaffold assembly protein, as well as other S acceptor proteins. The chain is Cysteine desulfurase IscS from Pseudomonas syringae pv. tomato (strain ATCC BAA-871 / DC3000).